The following is a 595-amino-acid chain: Actin-histidine N-methyltransferase (595 aa).

The disordered stretch occupies residues 1–22; the sequence is MGKKSRVKTQKSGTGATATVSP. Residues 10 to 20 show a composition bias toward polar residues; that stretch reads QKSGTGATATV. Residues Arg-75, 104–106, Arg-254, 275–279, and 325–327 contribute to the S-adenosyl-L-methionine site; these read EGF, DMCNH, and SGF. The region spanning 94–314 is the SET domain; the sequence is EGFEMVNFKE…AGEQIYIFYG (221 aa). At Ser-513 the chain carries Phosphoserine. Over residues 549-573 the composition is skewed to polar residues; it reads ENGLVNGENSIPNGTRSENENLNQE. Residues 549-595 form a disordered region; the sequence is ENGLVNGENSIPNGTRSENENLNQEGSKRAVEDAKGSSSDSTDEVKE. Residues 574–583 are compositionally biased toward basic and acidic residues; the sequence is GSKRAVEDAK.

It belongs to the class V-like SAM-binding methyltransferase superfamily. SETD3 actin-histidine methyltransferase family. In terms of assembly, interacts with MYOD1. In terms of processing, phosphorylated by GSK3B, which is required for recognition by the SCF(FBXW7) complex and subsequent degradation. Post-translationally, ubiquitinated by the SCF(FBXW7) complex following phosphorylation by GSK3B, leading to its degradation by the proteasome.

The protein localises to the cytoplasm. It is found in the nucleus. The catalysed reaction is L-histidyl-[protein] + S-adenosyl-L-methionine = N(tele)-methyl-L-histidyl-[protein] + S-adenosyl-L-homocysteine + H(+). In terms of biological role, protein-histidine N-methyltransferase that specifically mediates 3-methylhistidine (tele-methylhistidine) methylation of actin at 'His-73'. Histidine methylation of actin is required for smooth muscle contraction of the laboring uterus during delivery. Does not have protein-lysine N-methyltransferase activity and probably only catalyzes histidine methylation of actin. This chain is Actin-histidine N-methyltransferase, found in Plecturocebus moloch (Dusky titi monkey).